A 472-amino-acid polypeptide reads, in one-letter code: WAS protein family homolog DDB_G0292878 (472 aa).

The segment at leucine 279–glutamate 472 is disordered. Over residues tyrosine 282 to aspartate 299 the composition is skewed to polar residues. Positions asparagine 300–serine 314 are enriched in low complexity. Residues proline 320–proline 356 show a composition bias toward pro residues. Acidic residues predominate over residues asparagine 363 to asparagine 373. Residues glycine 374–isoleucine 383 are compositionally biased toward gly residues. One can recognise a WH2 domain in the interval alanine 382–alanine 401. The span at threonine 457–glutamate 472 shows a compositional bias: acidic residues.

It belongs to the WASH1 family.

Functionally, acts as a nucleation-promoting factor by activating the Arp2/3 complex to induce actin polymerization. In Dictyostelium discoideum (Social amoeba), this protein is WAS protein family homolog DDB_G0292878.